A 340-amino-acid polypeptide reads, in one-letter code: Holliday junction branch migration complex subunit RuvB (340 aa).

Positions 1 to 184 (MNENLDPTTK…FGISSRLQYY (184 aa)) are large ATPase domain (RuvB-L). ATP contacts are provided by residues leucine 23, arginine 24, glycine 65, lysine 68, threonine 69, threonine 70, 131-133 (EDF), arginine 174, tyrosine 184, and arginine 221. Threonine 69 contributes to the Mg(2+) binding site. The tract at residues 185–255 (STELLTTIVE…ISKYALKALN (71 aa)) is small ATPAse domain (RuvB-S). A head domain (RuvB-H) region spans residues 258-340 (AHGLDEMDNK…INTNIQGGLF (83 aa)). DNA-binding residues include arginine 313 and arginine 318.

It belongs to the RuvB family. Homohexamer. Forms an RuvA(8)-RuvB(12)-Holliday junction (HJ) complex. HJ DNA is sandwiched between 2 RuvA tetramers; dsDNA enters through RuvA and exits via RuvB. An RuvB hexamer assembles on each DNA strand where it exits the tetramer. Each RuvB hexamer is contacted by two RuvA subunits (via domain III) on 2 adjacent RuvB subunits; this complex drives branch migration. In the full resolvosome a probable DNA-RuvA(4)-RuvB(12)-RuvC(2) complex forms which resolves the HJ.

Its subcellular location is the cytoplasm. The catalysed reaction is ATP + H2O = ADP + phosphate + H(+). The RuvA-RuvB-RuvC complex processes Holliday junction (HJ) DNA during genetic recombination and DNA repair, while the RuvA-RuvB complex plays an important role in the rescue of blocked DNA replication forks via replication fork reversal (RFR). RuvA specifically binds to HJ cruciform DNA, conferring on it an open structure. The RuvB hexamer acts as an ATP-dependent pump, pulling dsDNA into and through the RuvAB complex. RuvB forms 2 homohexamers on either side of HJ DNA bound by 1 or 2 RuvA tetramers; 4 subunits per hexamer contact DNA at a time. Coordinated motions by a converter formed by DNA-disengaged RuvB subunits stimulates ATP hydrolysis and nucleotide exchange. Immobilization of the converter enables RuvB to convert the ATP-contained energy into a lever motion, pulling 2 nucleotides of DNA out of the RuvA tetramer per ATP hydrolyzed, thus driving DNA branch migration. The RuvB motors rotate together with the DNA substrate, which together with the progressing nucleotide cycle form the mechanistic basis for DNA recombination by continuous HJ branch migration. Branch migration allows RuvC to scan DNA until it finds its consensus sequence, where it cleaves and resolves cruciform DNA. The polypeptide is Holliday junction branch migration complex subunit RuvB (Flavobacterium johnsoniae (strain ATCC 17061 / DSM 2064 / JCM 8514 / BCRC 14874 / CCUG 350202 / NBRC 14942 / NCIMB 11054 / UW101) (Cytophaga johnsonae)).